The following is a 434-amino-acid chain: Serine hydroxymethyltransferase (434 aa).

Residues L128 and 132 to 134 each bind (6S)-5,6,7,8-tetrahydrofolate; that span reads GHL. K237 is subject to N6-(pyridoxal phosphate)lysine.

This sequence belongs to the SHMT family. Homodimer. Pyridoxal 5'-phosphate serves as cofactor.

Its subcellular location is the cytoplasm. It carries out the reaction (6R)-5,10-methylene-5,6,7,8-tetrahydrofolate + glycine + H2O = (6S)-5,6,7,8-tetrahydrofolate + L-serine. Its pathway is one-carbon metabolism; tetrahydrofolate interconversion. It participates in amino-acid biosynthesis; glycine biosynthesis; glycine from L-serine: step 1/1. Functionally, catalyzes the reversible interconversion of serine and glycine with tetrahydrofolate (THF) serving as the one-carbon carrier. This reaction serves as the major source of one-carbon groups required for the biosynthesis of purines, thymidylate, methionine, and other important biomolecules. Also exhibits THF-independent aldolase activity toward beta-hydroxyamino acids, producing glycine and aldehydes, via a retro-aldol mechanism. The protein is Serine hydroxymethyltransferase of Corynebacterium efficiens (strain DSM 44549 / YS-314 / AJ 12310 / JCM 11189 / NBRC 100395).